A 142-amino-acid polypeptide reads, in one-letter code: Semaphorin-like protein VACWR164 (142 aa).

The Sema domain occupies 1 to 142 (MNTIKQSFST…MPQMKKILKM (142 aa)).

The protein belongs to the semaphorin family.

This chain is Semaphorin-like protein VACWR164, found in Bos taurus (Bovine).